A 503-amino-acid chain; its full sequence is Probable cytosol aminopeptidase (503 aa).

The Mn(2+) site is built by Lys274 and Asp279. Residue Lys286 is part of the active site. Mn(2+) contacts are provided by Asp297, Asp356, and Glu358. Residue Arg360 is part of the active site.

The protein belongs to the peptidase M17 family. The cofactor is Mn(2+).

The protein resides in the cytoplasm. It catalyses the reaction Release of an N-terminal amino acid, Xaa-|-Yaa-, in which Xaa is preferably Leu, but may be other amino acids including Pro although not Arg or Lys, and Yaa may be Pro. Amino acid amides and methyl esters are also readily hydrolyzed, but rates on arylamides are exceedingly low.. The catalysed reaction is Release of an N-terminal amino acid, preferentially leucine, but not glutamic or aspartic acids.. Functionally, presumably involved in the processing and regular turnover of intracellular proteins. Catalyzes the removal of unsubstituted N-terminal amino acids from various peptides. In Burkholderia thailandensis (strain ATCC 700388 / DSM 13276 / CCUG 48851 / CIP 106301 / E264), this protein is Probable cytosol aminopeptidase.